An 89-amino-acid polypeptide reads, in one-letter code: Small ribosomal subunit protein uS15 (89 aa).

This sequence belongs to the universal ribosomal protein uS15 family. In terms of assembly, part of the 30S ribosomal subunit. Forms a bridge to the 50S subunit in the 70S ribosome, contacting the 23S rRNA.

Its function is as follows. One of the primary rRNA binding proteins, it binds directly to 16S rRNA where it helps nucleate assembly of the platform of the 30S subunit by binding and bridging several RNA helices of the 16S rRNA. Forms an intersubunit bridge (bridge B4) with the 23S rRNA of the 50S subunit in the ribosome. The sequence is that of Small ribosomal subunit protein uS15 from Saccharopolyspora erythraea (strain ATCC 11635 / DSM 40517 / JCM 4748 / NBRC 13426 / NCIMB 8594 / NRRL 2338).